Reading from the N-terminus, the 606-residue chain is Anthranilate synthase alpha subunit 2, chloroplastic (606 aa).

A chloroplast-targeting transit peptide spans 1–49 (MESIAAATFTPSRLAARPATPAAAAAPVRARAAVAAGGRRRTSRRGGVR).

The protein belongs to the anthranilate synthase component I family. Heterotetramer consisting of two non-identical subunits: a beta subunit and a large alpha subunit.

It is found in the plastid. It localises to the chloroplast. It catalyses the reaction chorismate + L-glutamine = anthranilate + pyruvate + L-glutamate + H(+). Its pathway is amino-acid biosynthesis; L-tryptophan biosynthesis; L-tryptophan from chorismate: step 1/5. Feedback inhibition by tryptophan. In terms of biological role, part of a heterotetrameric complex that catalyzes the two-step biosynthesis of anthranilate, an intermediate in the biosynthesis of L-tryptophan. In the first step, the glutamine-binding beta subunit of anthranilate synthase (AS) provides the glutamine amidotransferase activity which generates ammonia as a substrate that, along with chorismate, is used in the second step, catalyzed by the large alpha subunit of AS to produce anthranilate. This is Anthranilate synthase alpha subunit 2, chloroplastic from Oryza sativa subsp. japonica (Rice).